A 240-amino-acid polypeptide reads, in one-letter code: Ribonuclease HII (240 aa).

Positions 31–222 (RLIAGVDEAG…VRRALGLETA (192 aa)) constitute an RNase H type-2 domain. Positions 37, 38, and 130 each coordinate a divalent metal cation.

It belongs to the RNase HII family. It depends on Mn(2+) as a cofactor. The cofactor is Mg(2+).

It is found in the cytoplasm. It carries out the reaction Endonucleolytic cleavage to 5'-phosphomonoester.. In terms of biological role, endonuclease that specifically degrades the RNA of RNA-DNA hybrids. The protein is Ribonuclease HII of Xanthomonas campestris pv. campestris (strain 8004).